A 485-amino-acid polypeptide reads, in one-letter code: uncharacterized protein (485 aa).

The next 13 membrane-spanning stretches (helical) occupy residues 13–33 (WSAL…VILS), 38–58 (PFEF…DMLA), 79–99 (ALYW…IILS), 111–131 (LSFL…GQQY), 160–180 (VIIG…LLTV), 211–231 (LLFS…SSIT), 234–254 (IVAR…FNVA), 297–317 (INFP…YLVF), 321–341 (WLFI…RMVA), 365–385 (IIIF…VGAA), 388–408 (FLIC…KPVL), 420–440 (FIPF…DIYI), and 445–465 (LTFF…TIFI).

This sequence belongs to the polysaccharide synthase family.

It is found in the cell membrane. This is an uncharacterized protein from Klebsiella pneumoniae.